Reading from the N-terminus, the 323-residue chain is Phospho-N-acetylmuramoyl-pentapeptide-transferase (323 aa).

Helical transmembrane passes span 5-25, 57-77, 81-101, 118-138, 140-160, 173-193, 196-216, 225-247, and 302-322; these read SAVL…PSLI, LLFI…QGLI, LWAL…DDSI, LCQV…GFQM, FGTT…IVGF, LVSG…LVNL, PGYP…LGFF, IFMG…LLLH, and IVFW…ILLV.

This sequence belongs to the glycosyltransferase 4 family. MraY subfamily. Mg(2+) is required as a cofactor.

The protein resides in the cell membrane. The catalysed reaction is UDP-N-acetyl-alpha-D-muramoyl-L-alanyl-gamma-D-glutamyl-L-lysyl-D-alanyl-D-alanine + di-trans,octa-cis-undecaprenyl phosphate = Mur2Ac(oyl-L-Ala-gamma-D-Glu-L-Lys-D-Ala-D-Ala)-di-trans,octa-cis-undecaprenyl diphosphate + UMP. Its pathway is cell wall biogenesis; peptidoglycan biosynthesis. Catalyzes the initial step of the lipid cycle reactions in the biosynthesis of the cell wall peptidoglycan: transfers peptidoglycan precursor phospho-MurNAc-pentapeptide from UDP-MurNAc-pentapeptide onto the lipid carrier undecaprenyl phosphate, yielding undecaprenyl-pyrophosphoryl-MurNAc-pentapeptide, known as lipid I. The chain is Phospho-N-acetylmuramoyl-pentapeptide-transferase from Limosilactobacillus reuteri (strain DSM 20016) (Lactobacillus reuteri).